Reading from the N-terminus, the 569-residue chain is Dihydroxy-acid dehydratase (569 aa).

C61 lines the [2Fe-2S] cluster pocket. Mg(2+) is bound at residue D93. C134 serves as a coordination point for [2Fe-2S] cluster. Mg(2+) is bound by residues D135 and K136. K136 is modified (N6-carboxylysine). C211 contributes to the [2Fe-2S] cluster binding site. E462 is a Mg(2+) binding site. The Proton acceptor role is filled by S488.

The protein belongs to the IlvD/Edd family. As to quaternary structure, homodimer. [2Fe-2S] cluster serves as cofactor. The cofactor is Mg(2+).

It catalyses the reaction (2R)-2,3-dihydroxy-3-methylbutanoate = 3-methyl-2-oxobutanoate + H2O. The catalysed reaction is (2R,3R)-2,3-dihydroxy-3-methylpentanoate = (S)-3-methyl-2-oxopentanoate + H2O. It functions in the pathway amino-acid biosynthesis; L-isoleucine biosynthesis; L-isoleucine from 2-oxobutanoate: step 3/4. The protein operates within amino-acid biosynthesis; L-valine biosynthesis; L-valine from pyruvate: step 3/4. Functions in the biosynthesis of branched-chain amino acids. Catalyzes the dehydration of (2R,3R)-2,3-dihydroxy-3-methylpentanoate (2,3-dihydroxy-3-methylvalerate) into 2-oxo-3-methylpentanoate (2-oxo-3-methylvalerate) and of (2R)-2,3-dihydroxy-3-methylbutanoate (2,3-dihydroxyisovalerate) into 2-oxo-3-methylbutanoate (2-oxoisovalerate), the penultimate precursor to L-isoleucine and L-valine, respectively. This is Dihydroxy-acid dehydratase from Tropheryma whipplei (strain Twist) (Whipple's bacillus).